A 163-amino-acid polypeptide reads, in one-letter code: Probable ribosome biogenesis protein RLP24 (163 aa).

The protein belongs to the eukaryotic ribosomal protein eL24 family. In terms of assembly, associated with nucleolar and cytoplasmic pre-60S particles. At the end of biogenesis it dissociates from cytoplasmic pre-60S particles and is likely to be exchanged for its ribosomal homolog, RPL24.

It is found in the nucleus. Its subcellular location is the nucleolus. In terms of biological role, involved in the biogenesis of the 60S ribosomal subunit. Ensures the docking of GTPBP4/NOG1 to pre-60S particles. The protein is Probable ribosome biogenesis protein RLP24 (Rsl24d1) of Mus musculus (Mouse).